The chain runs to 887 residues: Translation initiation factor IF-2 (887 aa).

A disordered region spans residues 1-291 (MTDQADTSER…RRRVERERKK (291 aa)). A compositionally biased stretch (low complexity) spans 58 to 117 (AAPAAAPAAAPAAAEEVAKKPVAAPEVKPAAPVEERPAPVAKAAPEVKAVPAPAPAAAPA). 4 stretches are compositionally biased toward basic and acidic residues: residues 148–178 (SARE…EAER), 185–194 (AAEEASRHTA), 201–215 (RAAE…DDRP), and 267–276 (AFDDESERQR). A tr-type G domain is found at 385–553 (ARAPVVTVMG…TILLQAELLD (169 aa)). The tract at residues 394 to 401 (GHVDHGKT) is G1. GTP is bound at residue 394-401 (GHVDHGKT). A G2 region spans residues 419 to 423 (GITQH). A G3 region spans residues 441-444 (DTPG). Residues 441–445 (DTPGH) and 495–498 (NKMD) contribute to the GTP site. Residues 495 to 498 (NKMD) form a G4 region. The G5 stretch occupies residues 531–533 (SAK).

The protein belongs to the TRAFAC class translation factor GTPase superfamily. Classic translation factor GTPase family. IF-2 subfamily.

The protein localises to the cytoplasm. Functionally, one of the essential components for the initiation of protein synthesis. Protects formylmethionyl-tRNA from spontaneous hydrolysis and promotes its binding to the 30S ribosomal subunits. Also involved in the hydrolysis of GTP during the formation of the 70S ribosomal complex. The polypeptide is Translation initiation factor IF-2 (Parvibaculum lavamentivorans (strain DS-1 / DSM 13023 / NCIMB 13966)).